Reading from the N-terminus, the 178-residue chain is ATP synthase subunit delta (178 aa).

It belongs to the ATPase delta chain family. As to quaternary structure, F-type ATPases have 2 components, F(1) - the catalytic core - and F(0) - the membrane proton channel. F(1) has five subunits: alpha(3), beta(3), gamma(1), delta(1), epsilon(1). F(0) has three main subunits: a(1), b(2) and c(10-14). The alpha and beta chains form an alternating ring which encloses part of the gamma chain. F(1) is attached to F(0) by a central stalk formed by the gamma and epsilon chains, while a peripheral stalk is formed by the delta and b chains.

Its subcellular location is the cell membrane. In terms of biological role, f(1)F(0) ATP synthase produces ATP from ADP in the presence of a proton or sodium gradient. F-type ATPases consist of two structural domains, F(1) containing the extramembraneous catalytic core and F(0) containing the membrane proton channel, linked together by a central stalk and a peripheral stalk. During catalysis, ATP synthesis in the catalytic domain of F(1) is coupled via a rotary mechanism of the central stalk subunits to proton translocation. Functionally, this protein is part of the stalk that links CF(0) to CF(1). It either transmits conformational changes from CF(0) to CF(1) or is implicated in proton conduction. This is ATP synthase subunit delta from Streptococcus equi subsp. zooepidemicus (strain H70).